Reading from the N-terminus, the 358-residue chain is Peptide chain release factor 1 (358 aa).

The residue at position 233 (Gln233) is an N5-methylglutamine.

It belongs to the prokaryotic/mitochondrial release factor family. Methylated by PrmC. Methylation increases the termination efficiency of RF1.

The protein localises to the cytoplasm. Its function is as follows. Peptide chain release factor 1 directs the termination of translation in response to the peptide chain termination codons UAG and UAA. The protein is Peptide chain release factor 1 of Flavobacterium johnsoniae (strain ATCC 17061 / DSM 2064 / JCM 8514 / BCRC 14874 / CCUG 350202 / NBRC 14942 / NCIMB 11054 / UW101) (Cytophaga johnsonae).